A 246-amino-acid polypeptide reads, in one-letter code: Ribonuclease PH (246 aa).

Residues 1–33 are disordered; it reads MTPPKLPVREGRDALTPRPVSVQRGVNPHAPGS. Phosphate is bound by residues arginine 90 and 128-130; that span reads GTR.

Belongs to the RNase PH family. As to quaternary structure, homohexameric ring arranged as a trimer of dimers.

The catalysed reaction is tRNA(n+1) + phosphate = tRNA(n) + a ribonucleoside 5'-diphosphate. In terms of biological role, phosphorolytic 3'-5' exoribonuclease that plays an important role in tRNA 3'-end maturation. Removes nucleotide residues following the 3'-CCA terminus of tRNAs; can also add nucleotides to the ends of RNA molecules by using nucleoside diphosphates as substrates, but this may not be physiologically important. Probably plays a role in initiation of 16S rRNA degradation (leading to ribosome degradation) during starvation. The sequence is that of Ribonuclease PH from Deinococcus radiodurans (strain ATCC 13939 / DSM 20539 / JCM 16871 / CCUG 27074 / LMG 4051 / NBRC 15346 / NCIMB 9279 / VKM B-1422 / R1).